The primary structure comprises 92 residues: Small ribosomal subunit protein uS19 (92 aa).

Belongs to the universal ribosomal protein uS19 family.

In terms of biological role, protein S19 forms a complex with S13 that binds strongly to the 16S ribosomal RNA. In Limosilactobacillus reuteri (strain DSM 20016) (Lactobacillus reuteri), this protein is Small ribosomal subunit protein uS19.